The primary structure comprises 120 residues: Large ribosomal subunit protein uL18 (120 aa).

This sequence belongs to the universal ribosomal protein uL18 family. As to quaternary structure, part of the 50S ribosomal subunit; part of the 5S rRNA/L5/L18/L25 subcomplex. Contacts the 5S and 23S rRNAs.

This is one of the proteins that bind and probably mediate the attachment of the 5S RNA into the large ribosomal subunit, where it forms part of the central protuberance. In Bradyrhizobium sp. (strain BTAi1 / ATCC BAA-1182), this protein is Large ribosomal subunit protein uL18.